The sequence spans 298 residues: MSSVSELGYLGMSVTDLDAWRAYAAEVAGMEVVDEGESDRIYLRMDLWHHRIALIKGDTDDLAYMGWRLGDPTEFESMVEKLTNAGIAVTVASDAEARERRVLGLAKLTDPGGNPTEIFYGPQVDAHKPFHPGRPMFGKFVTGSEGIGHCILRQDDVEAAAAFYRLLGLRGSVEYQLHLPNGMVAMPYFMHCNERQHSVAFGLGPMEKRINHLMFEYTELDDLGLAHDIVRERQIDVALQLGKHANDLALTFYCANPSGWLWEFGWGARKAPAQQEFYTRDIFGHGNEAQGYGMDVPL.

2 consecutive VOC domains span residues 6–121 (ELGY…IFYG) and 146–267 (GIGH…FGWG). His-149 contributes to the Fe cation binding site. Substrate is bound by residues His-149, 196–197 (QH), His-212, and Tyr-253. His-212 is a binding site for Fe cation. Glu-263 contacts Fe cation.

It belongs to the extradiol ring-cleavage dioxygenase family. As to quaternary structure, homooctamer. The cofactor is Fe(2+).

The enzyme catalyses naphthalene-1,2-diol + O2 = 2-hydroxychromene-2-carboxylate + H(+). It participates in aromatic compound metabolism; naphthalene degradation. Its function is as follows. Involved in the naphthalene and naphthalenesulfonate catabolic pathway. Catalyzes the meta-cleavage of 1,2-dihydroxynaphthalene (1,2-DHN) to yield 2-hydroxychromene-2-carboxylic acid. Can also cleave 1,2,5-trihydroxynaphthalene (1,2,5-THN), 1,2,6-trihydroxynaphthalene (1,2,6-THN), 1,2,7-trihydroxynaphthalene (1,2,7-THN), 2,3-dihydroxybiphenyl, 3,4-dihydroxybiphenyl, catechol, 3-methylcatechol and 4-methylcatechol. In Sphingobium xenophagum, this protein is 1,2-dihydroxynaphthalene dioxygenase (nsaC).